The chain runs to 68 residues: Large ribosomal subunit protein bL35 (68 aa).

This sequence belongs to the bacterial ribosomal protein bL35 family.

The chain is Large ribosomal subunit protein bL35 from Rickettsia bellii (strain RML369-C).